We begin with the raw amino-acid sequence, 149 residues long: uncharacterized protein (149 aa).

The N-acetyltransferase domain occupies 2–146 (LEVKTISVED…NHIVMYKTLR (145 aa)).

It belongs to the acetyltransferase family.

This is an uncharacterized protein from Bacillus subtilis (strain 168).